The chain runs to 176 residues: ATP synthase subunit delta (176 aa).

Belongs to the ATPase delta chain family. In terms of assembly, F-type ATPases have 2 components, F(1) - the catalytic core - and F(0) - the membrane proton channel. F(1) has five subunits: alpha(3), beta(3), gamma(1), delta(1), epsilon(1). F(0) has three main subunits: a(1), b(2) and c(10-14). The alpha and beta chains form an alternating ring which encloses part of the gamma chain. F(1) is attached to F(0) by a central stalk formed by the gamma and epsilon chains, while a peripheral stalk is formed by the delta and b chains.

Its subcellular location is the cell membrane. In terms of biological role, f(1)F(0) ATP synthase produces ATP from ADP in the presence of a proton or sodium gradient. F-type ATPases consist of two structural domains, F(1) containing the extramembraneous catalytic core and F(0) containing the membrane proton channel, linked together by a central stalk and a peripheral stalk. During catalysis, ATP synthesis in the catalytic domain of F(1) is coupled via a rotary mechanism of the central stalk subunits to proton translocation. Its function is as follows. This protein is part of the stalk that links CF(0) to CF(1). It either transmits conformational changes from CF(0) to CF(1) or is implicated in proton conduction. This chain is ATP synthase subunit delta, found in Wigglesworthia glossinidia brevipalpis.